A 182-amino-acid polypeptide reads, in one-letter code: NADH-quinone oxidoreductase subunit I (182 aa).

2 4Fe-4S ferredoxin-type domains span residues 50–82 (IILS…LQKA) and 92–121 (EFFR…MTPD). [4Fe-4S] cluster-binding residues include cysteine 62, cysteine 65, cysteine 68, cysteine 72, cysteine 101, cysteine 104, cysteine 107, and cysteine 111.

The protein belongs to the complex I 23 kDa subunit family. NDH-1 is composed of 14 different subunits. Subunits NuoA, H, J, K, L, M, N constitute the membrane sector of the complex. The cofactor is [4Fe-4S] cluster.

It localises to the cell inner membrane. It catalyses the reaction a quinone + NADH + 5 H(+)(in) = a quinol + NAD(+) + 4 H(+)(out). In terms of biological role, NDH-1 shuttles electrons from NADH, via FMN and iron-sulfur (Fe-S) centers, to quinones in the respiratory chain. The immediate electron acceptor for the enzyme in this species is believed to be ubiquinone. Couples the redox reaction to proton translocation (for every two electrons transferred, four hydrogen ions are translocated across the cytoplasmic membrane), and thus conserves the redox energy in a proton gradient. The polypeptide is NADH-quinone oxidoreductase subunit I (Psychrobacter cryohalolentis (strain ATCC BAA-1226 / DSM 17306 / VKM B-2378 / K5)).